We begin with the raw amino-acid sequence, 122 residues long: MPRIIGIDIPAKKKLKISLTYIYGIGPALSKEIIARLQLNPEARAAELTEEEVGRLNALLQSDYVVEGDLRRRVQSDIKRLITIHAYRGQRHRLSLPVRGQRTKTNSRTRKGKRKTIAGKKK.

Residues 96–122 (LPVRGQRTKTNSRTRKGKRKTIAGKKK) form a disordered region. Residues 101 to 122 (QRTKTNSRTRKGKRKTIAGKKK) are compositionally biased toward basic residues.

This sequence belongs to the universal ribosomal protein uS13 family. In terms of assembly, part of the 30S ribosomal subunit. Forms a loose heterodimer with protein S19. Forms two bridges to the 50S subunit in the 70S ribosome.

Located at the top of the head of the 30S subunit, it contacts several helices of the 16S rRNA. In the 70S ribosome it contacts the 23S rRNA (bridge B1a) and protein L5 of the 50S subunit (bridge B1b), connecting the 2 subunits; these bridges are implicated in subunit movement. Contacts the tRNAs in the A and P-sites. This is Small ribosomal subunit protein uS13 from Chlamydia trachomatis serovar L2 (strain ATCC VR-902B / DSM 19102 / 434/Bu).